Consider the following 192-residue polypeptide: MQADTPKGCFVAVVGPSGAGKDTIMDAARVALSGDMRFHFVRRIITRTQMPGTEDHDSLDEADFARAAGEGRFALHWQAHGLRYGLPKTLDDEIAGGAVVIANVSRRVLSDIRRLYTSRSVVVISARTEVLAQRLASRGRESREEIAARLAREVGFDDGSGDVVTIDNSGEVGASTKAFLHHLHEIAVKTIA.

15 to 22 contacts ATP; the sequence is GPSGAGKD.

This sequence belongs to the ribose 1,5-bisphosphokinase family.

It catalyses the reaction alpha-D-ribose 1,5-bisphosphate + ATP = 5-phospho-alpha-D-ribose 1-diphosphate + ADP. It functions in the pathway metabolic intermediate biosynthesis; 5-phospho-alpha-D-ribose 1-diphosphate biosynthesis; 5-phospho-alpha-D-ribose 1-diphosphate from D-ribose 5-phosphate (route II): step 3/3. Catalyzes the phosphorylation of ribose 1,5-bisphosphate to 5-phospho-D-ribosyl alpha-1-diphosphate (PRPP). This chain is Ribose 1,5-bisphosphate phosphokinase PhnN, found in Brucella melitensis biotype 2 (strain ATCC 23457).